A 420-amino-acid polypeptide reads, in one-letter code: Serine hydroxymethyltransferase (420 aa).

(6S)-5,6,7,8-tetrahydrofolate is bound by residues leucine 117 and 121–123 (GHL). Lysine 226 carries the N6-(pyridoxal phosphate)lysine modification.

Belongs to the SHMT family. Homodimer. The cofactor is pyridoxal 5'-phosphate.

The protein resides in the cytoplasm. It catalyses the reaction (6R)-5,10-methylene-5,6,7,8-tetrahydrofolate + glycine + H2O = (6S)-5,6,7,8-tetrahydrofolate + L-serine. It functions in the pathway one-carbon metabolism; tetrahydrofolate interconversion. Its pathway is amino-acid biosynthesis; glycine biosynthesis; glycine from L-serine: step 1/1. Its function is as follows. Catalyzes the reversible interconversion of serine and glycine with tetrahydrofolate (THF) serving as the one-carbon carrier. This reaction serves as the major source of one-carbon groups required for the biosynthesis of purines, thymidylate, methionine, and other important biomolecules. Also exhibits THF-independent aldolase activity toward beta-hydroxyamino acids, producing glycine and aldehydes, via a retro-aldol mechanism. The polypeptide is Serine hydroxymethyltransferase (Rhodopirellula baltica (strain DSM 10527 / NCIMB 13988 / SH1)).